An 835-amino-acid chain; its full sequence is MPWCNTRLRTCGASPKIFLRRVRCPVLLHNWTIGRVSSVSKMILRFLRSYSKRVDITRVRNIGIIAHIDAGKTTTTERMLYYSGKIKRIGDVDHGDTITDFLPQERSRGITIQSAAISFNWRDNYTVNLIDTPGHADFTFEVIRSLRVLDGCVTILDAVAGVEAQTEKVWKQAAEIPKVCFINKMDRVGAGYSRAVKELIVKLKTRVLLLNTPLFAARDSSADPVFVGVLDAVNGQLLEWDPEDPDKISAKAVDKECAHYEELVSAREALVETLSEVDEKLVEYFLGEADGDYMKVPVEVLNESIRRATLSQYAVPVLCGASFKNIGVQPLLDAVVDYLPSPAEARLPELSNKDLPVQHHLKNGLLVNKNANLCLALAFKVTTDPIRGAMVFIRVYSGVLNSGHTVYNSSTGVKFKLGKLIKMHANVAEDIKSLHPGDIGVLAGANVADHVRTGDTIVAHCTSKDGIRSFKKAELALRIHPIDIPPPVFSAAVEPRTLGNKKAMDESLTQLTREDPSLVIVRDEETGQTVMNGMGELHLEIAADRLLNEFKAPVRVGKVAVSYKETINTATETKHSETDDGYSFELEVRQYNEEDKVLFSNGWYPLGSDNNYLVIDPNPRFNEDNWPFPLKYEAFVNSIISCCIVALQRGGKTAGFPLHSCVIHVKRWRLPLDCAAAASILLTVRPLIISALTSLPTSAFSILEPIMNVEVTVQQQDLGSVVQDLTGARKANILSIDDEHHWADAAVTDKDVHLFHDIAEKQYLPPDSTVFQAKLNKEGQTGKIVKAHVPLKEMVSYMNKLRMLTKGRGSFHMSYLGMERASSDRVDGILEDADL.

The N-terminal 50 residues, 1-50 (MPWCNTRLRTCGASPKIFLRRVRCPVLLHNWTIGRVSSVSKMILRFLRSY), are a transit peptide targeting the mitochondrion. The 287-residue stretch at 57–343 (TRVRNIGIIA…AVVDYLPSPA (287 aa)) folds into the tr-type G domain. Residues 66–73 (AHIDAGKT), 131–135 (DTPGH), and 183–186 (NKMD) contribute to the GTP site.

The protein belongs to the TRAFAC class translation factor GTPase superfamily. Classic translation factor GTPase family. EF-G/EF-2 subfamily.

It is found in the mitochondrion. Its function is as follows. Mitochondrial GTPase that mediates the disassembly of ribosomes from messenger RNA at the termination of mitochondrial protein biosynthesis. Not involved in the GTP-dependent ribosomal translocation step during translation elongation. The protein is Ribosome-releasing factor 2, mitochondrial of Eremothecium gossypii (strain ATCC 10895 / CBS 109.51 / FGSC 9923 / NRRL Y-1056) (Yeast).